The following is a 173-amino-acid chain: Co-chaperone protein HscB homolog (173 aa).

In terms of domain architecture, J spans 5–77 (CHYALFDLQP…PRRARYLLAI (73 aa)).

This sequence belongs to the HscB family. As to quaternary structure, interacts with HscA and stimulates its ATPase activity.

Functionally, co-chaperone involved in the maturation of iron-sulfur cluster-containing proteins. Seems to help targeting proteins to be folded toward HscA. In Pseudomonas entomophila (strain L48), this protein is Co-chaperone protein HscB homolog.